A 37-amino-acid polypeptide reads, in one-letter code: Lambda-hexatoxin-Hv1c (37 aa).

Cystine bridges form between C3-C17, C10-C22, C13-C14, and C16-C32.

Belongs to the neurotoxin 11 (kappa toxin) family. In terms of tissue distribution, expressed by the venom gland.

The protein resides in the secreted. In terms of biological role, this excitatory toxin inhibits insect calcium-activated potassium (KCa) channels (Slo-type). Pan-neuronal expression in Drosophila is lethal but flies engineered to express the toxin only in clock neurons have defects in circadian rhythm but a normal lifespan. This is Lambda-hexatoxin-Hv1c from Hadronyche versuta (Blue mountains funnel-web spider).